The chain runs to 166 residues: Large ribosomal subunit protein uL10 (166 aa).

Belongs to the universal ribosomal protein uL10 family. In terms of assembly, part of the ribosomal stalk of the 50S ribosomal subunit. The N-terminus interacts with L11 and the large rRNA to form the base of the stalk. The C-terminus forms an elongated spine to which L12 dimers bind in a sequential fashion forming a multimeric L10(L12)X complex.

Forms part of the ribosomal stalk, playing a central role in the interaction of the ribosome with GTP-bound translation factors. The polypeptide is Large ribosomal subunit protein uL10 (Enterococcus faecalis (strain ATCC 700802 / V583)).